A 702-amino-acid polypeptide reads, in one-letter code: Polyribonucleotide nucleotidyltransferase (702 aa).

2 residues coordinate Mg(2+): D487 and D493. The KH domain occupies 554–613 (PKILTMQINPDKIRDVIGPSGKQINKIIEETGVKIDIEQDGTIFISSVNEEMNKKAKKII). Residues 623 to 691 (GQVYLGKVKR…KQGRVNLSRK (69 aa)) enclose the S1 motif domain.

It belongs to the polyribonucleotide nucleotidyltransferase family. It depends on Mg(2+) as a cofactor.

It is found in the cytoplasm. It carries out the reaction RNA(n+1) + phosphate = RNA(n) + a ribonucleoside 5'-diphosphate. Involved in mRNA degradation. Catalyzes the phosphorolysis of single-stranded polyribonucleotides processively in the 3'- to 5'-direction. The protein is Polyribonucleotide nucleotidyltransferase of Anoxybacillus flavithermus (strain DSM 21510 / WK1).